Reading from the N-terminus, the 81-residue chain is UPF0180 protein BLi01634/BL05144 (81 aa).

The protein belongs to the UPF0180 family.

This chain is UPF0180 protein BLi01634/BL05144, found in Bacillus licheniformis (strain ATCC 14580 / DSM 13 / JCM 2505 / CCUG 7422 / NBRC 12200 / NCIMB 9375 / NCTC 10341 / NRRL NRS-1264 / Gibson 46).